The following is a 180-amino-acid chain: Probable RNA 2'-phosphotransferase (180 aa).

The protein belongs to the KptA/TPT1 family.

In terms of biological role, removes the 2'-phosphate from RNA via an intermediate in which the phosphate is ADP-ribosylated by NAD followed by a presumed transesterification to release the RNA and generate ADP-ribose 1''-2''-cyclic phosphate (APPR&gt;P). May function as an ADP-ribosylase. This chain is Probable RNA 2'-phosphotransferase, found in Thermococcus kodakarensis (strain ATCC BAA-918 / JCM 12380 / KOD1) (Pyrococcus kodakaraensis (strain KOD1)).